The following is a 130-amino-acid chain: Phosphoribosyl-AMP cyclohydrolase (130 aa).

D78 serves as a coordination point for Mg(2+). C79 provides a ligand contact to Zn(2+). Mg(2+)-binding residues include D80 and D82. The Zn(2+) site is built by C96 and C103.

It belongs to the PRA-CH family. Homodimer. Requires Mg(2+) as cofactor. Zn(2+) serves as cofactor.

The protein resides in the cytoplasm. It catalyses the reaction 1-(5-phospho-beta-D-ribosyl)-5'-AMP + H2O = 1-(5-phospho-beta-D-ribosyl)-5-[(5-phospho-beta-D-ribosylamino)methylideneamino]imidazole-4-carboxamide. The protein operates within amino-acid biosynthesis; L-histidine biosynthesis; L-histidine from 5-phospho-alpha-D-ribose 1-diphosphate: step 3/9. Its function is as follows. Catalyzes the hydrolysis of the adenine ring of phosphoribosyl-AMP. The protein is Phosphoribosyl-AMP cyclohydrolase of Nitrosospira multiformis (strain ATCC 25196 / NCIMB 11849 / C 71).